The sequence spans 271 residues: MSALLGLRPEVQDTCISLGLMLLFVLFVGLARVIARQQLHRPVVHAFVLEFLATFQLCCCTHELQVLSEQDSAHPTWTLTLIYFFSLVHGLTLVGTASNPCGVMMQMILGGMSPEMGAVRLLAQLVSALCSRYCISALWSLSLTKYHYDERILACRNPIHTDMSKAIIIEAICSFIFHSALLHFQEVRTKLRIHLLAALITFLAYAGGSLTGALFNPALALSLHFPCFDELFYKFFVVYWLAPSVGVLMMILMFSFFLPWLHNNQMTNKKE.

The Cytoplasmic portion of the chain corresponds to M1 to T14. A helical membrane pass occupies residues C15 to A35. Residues R36–R41 are Lumenal-facing. Residues P42 to H62 form a helical membrane-spanning segment. The Cytoplasmic segment spans residues E63 to T76. The helical transmembrane segment at W77–A97 threads the bilayer. At S98–A166 the chain is on the lumenal side. The short motif at N99 to C101 is the NPC element. Residues I167 to V187 form a helical membrane-spanning segment. The Cytoplasmic portion of the chain corresponds to R188–H194. Residues L195–F215 form a helical membrane-spanning segment. An NPA motif is present at residues N216–A218. Residues N216–K234 lie on the Lumenal side of the membrane. Residues F235 to S255 form a helical membrane-spanning segment. Residues F256 to E271 are Cytoplasmic-facing.

This sequence belongs to the MIP/aquaporin (TC 1.A.8) family. AQP11/AQP12 subfamily. As to quaternary structure, homodimer; disulfide-linked. Homotetramer. Can also form homomultimer. In terms of processing, not glycosylated. Highly expressed in the S1 proximal tubule segment,. Expressed in the testis, kidney, and liver. Weakly expressed in the heart, brain, and muscle. Highly expressed in the testis. Expressed in the proximal tubule of the cortex of 8-day-old mouse kidney. Expressed in retina specifically at retinal Mueller glial cells. Expressed in brain. Expressed abundantly at the choroid plexus but also expressed weakly in the parenchyma. Expressed at the capillary endothelium in the cerebral white matter. Expressed in adult testis, in the elongated spermatids (ES) and in residual bodies inside Sertoli cells.

It is found in the endoplasmic reticulum membrane. Its subcellular location is the cytoplasmic vesicle membrane. It localises to the cell membrane. It carries out the reaction H2O(in) = H2O(out). It catalyses the reaction glycerol(in) = glycerol(out). The catalysed reaction is H2O2(out) = H2O2(in). In terms of biological role, channel protein that facilitates the transport of water, glycerol and hydrogen peroxide across membrane of cell or organelles guaranteeing intracellular homeostasis in several organes like liver, kidney and brain. In situation of stress, participates in endoplasmic reticulum (ER) homeostasis by regulating redox homeostasis through the transport of hydrogen peroxide across the endoplasmic reticulum membrane thereby regulating the oxidative stress through the NADPH oxidase 2 pathway. Plays a role by maintaining an environment suitable for translation or protein foldings in the ER lumen namely by participating in the PKD1 glycosylation processing resulting in regulation of PKD1 membrane trafficking thereby preventing the accumulation of unfolding protein in ER. Plays a role in the proximal tubule function by regulating its endosomal acidification. May play a role in postnatal kidney development. The chain is Aquaporin-11 from Mus musculus (Mouse).